Consider the following 489-residue polypeptide: Cytochrome P450 monooxygenase orf5 (489 aa).

The chain crosses the membrane as a helical span at residues 13-35; the sequence is FVRLLAFHLIGLFVSITVYRLFF. N-linked (GlcNAc...) asparagine glycans are attached at residues Asn37, Asn118, Asn171, and Asn345. Cys428 serves as a coordination point for heme.

Belongs to the cytochrome P450 family. It depends on heme as a cofactor.

It is found in the membrane. The protein operates within mycotoxin biosynthesis. Functionally, cytochrome P450 monooxygenase; part of the gene cluster that mediates the biosynthesis of brefeldin A (BFA), a protein transport inhibitor that shows antiviral, antifungal, and antitumor properties. The proposed biosynthesis of BFA involves formation of an acyclic polyketide chain that is differentially tailored throughout the backbone. The highly reducing polyketide synthase Bref-PKS is proposed to synthesize the precisely reduced octaketide precursor, which could then be directly offloaded by the thiohydrolase enzyme Bref-TH followed by a cytochrome P450 monooxygenase-mediated formation of the cyclopentane ring and macrocyclization to afford 7-deoxy BFA. Alternatively, the first ring annulation can also occur on the ACP-tethered intermediate before the thiohydrolase release and lactonization. The C7-hydroxylation by another cytochrome P450 monooxygenase is believed to be the final step in the process to obtain the final structure of BFA. In addition to the HRPKS Bref-PKS and the thiohydrolase Bref-TH, the brefeldin A biosynthesis cluster contains 4 cytochrome p450 monooxygenases (called orf3 to orf6), as well a the probable cluster-specific transcription regulator orf8. The sequence is that of Cytochrome P450 monooxygenase orf5 from Eupenicillium brefeldianum (Penicillium brefeldianum).